Reading from the N-terminus, the 531-residue chain is UDP-glucuronosyltransferase 1A5 (531 aa).

The signal sequence occupies residues 1-25 (MGLHVTLQGLAGLLLLLYALPWAEG). Asn116, Asn131, Asn139, Asn293, and Asn431 each carry an N-linked (GlcNAc...) asparagine glycan. A helical membrane pass occupies residues 489–505 (VIGFLLAIVLTVVFIVY).

The protein belongs to the UDP-glycosyltransferase family. In terms of assembly, homodimer. Homooligomer. Interacts with UGT1A1, UGT1A3, UGT1A4, UGT1A6, UGT1A7, UGT1A8, UGT1A9 and UGT1A10 to form heterodimers.

It is found in the endoplasmic reticulum membrane. It carries out the reaction glucuronate acceptor + UDP-alpha-D-glucuronate = acceptor beta-D-glucuronoside + UDP + H(+). The catalysed reaction is zolasartan + UDP-alpha-D-glucuronate = zolarsartan-1-N-beta-D-glucuronide + UDP. Functionally, UDP-glucuronosyltransferase (UGT) that catalyzes phase II biotransformation reactions in which lipophilic substrates are conjugated with glucuronic acid to increase the metabolite's water solubility, thereby facilitating excretion into either the urine or bile. Essential for the elimination and detoxification of drugs, xenobiotics and endogenous compounds. Involved in the glucuronidation of the AGTR1 angiotensin receptor antagonist zolarsatan, a drug which can inhibit the effect of angiotensin II. The sequence is that of UDP-glucuronosyltransferase 1A5 from Rattus norvegicus (Rat).